A 20-amino-acid chain; its full sequence is Octopamine receptor (20 aa).

It belongs to the G-protein coupled receptor 1 family.

Its subcellular location is the cell membrane. Putative receptor for octopamine. Octopamine (OA) is a neurotransmitter, neurohormone, and neuromodulator in invertebrates. The activity of this receptor is mediated by G proteins which activate adenylyl cyclase. The chain is Octopamine receptor from Photinus pyralis (Common eastern firefly).